The chain runs to 195 residues: Cell division protein SepF (195 aa).

The tract at residues 32 to 54 (RYSKTNSSETLAPEEEEPIRNRR) is disordered.

The protein belongs to the SepF family. Homodimer. Interacts with FtsZ.

The protein localises to the cytoplasm. Cell division protein that is part of the divisome complex and is recruited early to the Z-ring. Probably stimulates Z-ring formation, perhaps through the cross-linking of FtsZ protofilaments. Its function overlaps with FtsA. The sequence is that of Cell division protein SepF from Gloeothece citriformis (strain PCC 7424) (Cyanothece sp. (strain PCC 7424)).